The sequence spans 626 residues: Nuclear receptor subfamily 4 group A member 3 (626 aa).

The segment at 1–108 (MPCVQAQYSP…HHHHHHHHHH (108 aa)) is activation function (AF)-1 domain. The segment at 1–138 (MPCVQAQYSP…PSTSMYFKQS (138 aa)) is required for DNA-PK heterotrimer. An interaction with NCOA1, NCOA2, NCOA3 and KAT2B region spans residues 1 to 291 (MPCVQAQYSP…SRSSSSGEGT (291 aa)). Disordered regions lie at residues 92-152 (PSYH…PPQA), 192-211 (HFKPSPPHPPAPSPAGGHHL), and 265-284 (PTASSLLGESPSLPSPPSRS). A compositionally biased stretch (basic residues) spans 93–110 (SYHHHHHHHHHHHHHHQQ). Composition is skewed to pro residues over residues 140 to 149 (PSTPTTPAFP) and 195 to 204 (PSPPHPPAPS). Residues 268 to 284 (SSLLGESPSLPSPPSRS) are compositionally biased toward low complexity. A DNA-binding region (nuclear receptor) is located at residues 289 to 364 (EGTCAVCGDN…VGMVKEVVRT (76 aa)). 2 consecutive NR C4-type zinc fingers follow at residues 292-312 (CAVCGDNAACQHYGVRTCEGC) and 328-352 (CLANKNCPVDKRRRNRCQYCRFQKC). The segment at 364-394 (TDSLKGRRGRLPSKPKSPLQQEPSQPSPPSP) is disordered. Low complexity predominate over residues 377 to 387 (KPKSPLQQEPS). The tract at residues 379-626 (KSPLQQEPSQ…DKLFLDTLPF (248 aa)) is interaction with KAT2B. An NR LBD domain is found at 394–623 (PPICMMNALV…SIIDKLFLDT (230 aa)).

The protein belongs to the nuclear hormone receptor family. NR4 subfamily. Interacts with SIX3 (via homeobox); differentially regulates the transcriptional activities of NR4A3. Interacts with the constituents of DNA-PK heterotrimer PRKDC, XRCC6 and XRCC5; phosphorylates and prevents NR4A3 ubiquitinylation and degradation. Interacts with NCOA2; potentiates the activity of the NR4A3. Interacts with NCOA1, NCOA3, MED1 and KAT2B. Interacts with EP300 and NCOA2; mediates the recruitment of MED1 in the coactivator complex. Interacts with NR3C1 (via nuclear receptor DNA-binding domain); the interactions represses transcription activity of NR4A3 on the POMC promoter Nur response element (NurRE). Interacts with TRIM28; the interactions potentiates NR4A3 activity on NurRE promoter. Binds DNA as a monomer and homodimer. Interacts with PARP1; activates PARP1 by improving acetylation of PARP1 and suppressing the interaction between PARP1 and SIRT1. In terms of processing, phosphorylated by PRKDC. In terms of tissue distribution, isoform alpha is highly expressed in skeletal muscle. Isoform beta is highly expressed in skeletal muscle and low expressed in fetal brain and placenta.

The protein resides in the nucleus. Functionally, transcriptional activator that binds to regulatory elements in promoter regions in a cell- and response element (target)-specific manner. Induces gene expression by binding as monomers to the NR4A1 response element (NBRE) 5'-AAAAGGTCA-3' site and as homodimers to the Nur response element (NurRE) site in the promoter of their regulated target genes. Plays a role in the regulation of proliferation, survival and differentiation of many different cell types and also in metabolism and inflammation. Mediates proliferation of vascular smooth muscle, myeloid progenitor cell and type B pancreatic cells; promotes mitogen-induced vascular smooth muscle cell proliferation through transactivation of SKP2 promoter by binding a NBRE site. Upon PDGF stimulation, stimulates vascular smooth muscle cell proliferation by regulating CCND1 and CCND2 expression. In islets, induces type B pancreatic cell proliferation through up-regulation of genes that activate cell cycle, as well as genes that cause degradation of the CDKN1A. Negatively regulates myeloid progenitor cell proliferation by repressing RUNX1 in a NBRE site-independent manner. During inner ear, plays a role as a key mediator of the proliferative growth phase of semicircular canal development. Also mediates survival of neuron and smooth muscle cells; mediates CREB-induced neuronal survival, and during hippocampus development, plays a critical role in pyramidal cell survival and axonal guidance. Is required for S phase entry of the cell cycle and survival of smooth muscle cells by inducing CCND1, resulting in RB1 phosphorylation. Binds to NBRE motif in CCND1 promoter, resulting in the activation of the promoter and CCND1 transcription. Also plays a role in inflammation; upon TNF stimulation, mediates monocyte adhesion by inducing the expression of VCAM1 and ICAM1 by binding to the NBRE consensus site. In mast cells activated by Fc-epsilon receptor cross-linking, promotes the synthesis and release of cytokines but impairs events leading to degranulation. Also plays a role in metabolism; by modulating feeding behavior; and by playing a role in energy balance by inhibiting the glucocorticoid-induced orexigenic neuropeptides AGRP expression, at least in part by forming a complex with activated NR3C1 on the AGRP- glucocorticoid response element (GRE), and thus weakening the DNA binding activity of NR3C1. Upon catecholamines stimulation, regulates gene expression that controls oxidative metabolism in skeletal muscle. Plays a role in glucose transport by regulating translocation of the SLC2A4 glucose transporter to the cell surface. Finally, during gastrulation plays a crucial role in the formation of anterior mesoderm by controlling cell migration. Inhibits adipogenesis. Also participates in cardiac hypertrophy by activating PARP1. The protein is Nuclear receptor subfamily 4 group A member 3 (NR4A3) of Homo sapiens (Human).